Consider the following 368-residue polypeptide: Peptide chain release factor 2 (368 aa).

Glutamine 250 is subject to N5-methylglutamine.

The protein belongs to the prokaryotic/mitochondrial release factor family. Post-translationally, methylated by PrmC. Methylation increases the termination efficiency of RF2.

The protein resides in the cytoplasm. Peptide chain release factor 2 directs the termination of translation in response to the peptide chain termination codons UGA and UAA. This is Peptide chain release factor 2 from Chlamydia trachomatis serovar L2b (strain UCH-1/proctitis).